The following is a 517-amino-acid chain: Dopamine receptor 4 (517 aa).

Residues 1–46 are Extracellular-facing; the sequence is MLAYGSDPNAEDLYITMTPSVSTENDTTVWATEEPAAIVWRHPLLA. Asn25 carries N-linked (GlcNAc...) asparagine glycosylation. Residues 47–67 form a helical membrane-spanning segment; the sequence is IALFSICLLTVAGNCLVVIAV. The Cytoplasmic segment spans residues 68–77; that stretch reads CTKKYLRNPT. A helical transmembrane segment spans residues 78 to 98; the sequence is GYLIISLAIADLIVGVIVMPM. At 99-108 the chain is on the extracellular side; sequence NSLFEIANHT. N-linked (GlcNAc...) asparagine glycosylation occurs at Asn106. A helical transmembrane segment spans residues 109 to 129; it reads WLFGLMMCDVFHAMDILASTA. Topologically, residues 130 to 159 are cytoplasmic; sequence SIWNLCVISLDRYMAGQDPIGYRDKVSKRR. The chain crosses the membrane as a helical span at residues 160–180; the sequence is ILMAILSVWVLSAILSFPGII. Topologically, residues 181–209 are extracellular; sequence WWRTSSPHLYEDQSQCLFTDSKMYVSFSS. A helical membrane pass occupies residues 210–230; sequence LVSFYIPLFLILFAYGKVYII. The Cytoplasmic segment spans residues 231-409; sequence ATRHSKGMRM…YVHEQRAART (179 aa). The disordered stretch occupies residues 309-339; sequence NDRGEHNNNNTVRQPLLRGTEGCHSDSISRS. Residues 410-430 traverse the membrane as a helical segment; the sequence is LSIVVGAFILCWTPFFVFTPL. Residues 431-442 lie on the Extracellular side of the membrane; it reads TAFCESCFSNKE. The chain crosses the membrane as a helical span at residues 443–463; sequence TIFTFVTWAGHLNSMLNPLIY. Over 464-517 the chain is Cytoplasmic; it reads SRFSRDFRRAFKQILTCQRQQKVKTAFKTPLSLVFTQLISVTQMWEQPPNTSIE.

The protein belongs to the G-protein coupled receptor 1 family. As to expression, expressed in pharyngeal neurons I1 and I2, neurons ASG, AVL, CAN, PQR, vulva, intestine, rectal glands and rectal epithelial glands. Also expressed in neurons in ray 8 in males.

It is found in the cell membrane. In terms of biological role, receptor for dopamine. The activity of this receptor is mediated by G proteins which activate adenylyl cyclase. In terms of antagonist responses, would be classed with the D1-like dopamine receptor group. This Caenorhabditis elegans protein is Dopamine receptor 4 (dop-4).